A 366-amino-acid polypeptide reads, in one-letter code: Variable large protein 10 (366 aa).

The first 18 residues, 1–18 (MRKRISAIIMTLFMVLAS), serve as a signal peptide directing secretion. Cysteine 19 carries the N-palmitoyl cysteine lipid modification. Cysteine 19 is lipidated: S-diacylglycerol cysteine.

The protein belongs to the variable large protein (Vlp) family. Beta subfamily.

It localises to the cell outer membrane. Its function is as follows. The Vlp and Vsp proteins are antigenically distinct proteins, only one vlp or vsp gene is transcriptionally active at any one time. Switching between these genes is a mechanism of host immune response evasion. The sequence is that of Variable large protein 10 from Borrelia hermsii.